Reading from the N-terminus, the 106-residue chain is Late cornified envelope protein 2A (106 aa).

The span at 1-10 shows a compositional bias: low complexity; that stretch reads MSCQQNQQQC. Positions 1–25 are disordered; sequence MSCQQNQQQCQPPPKCPPKCPPKCP. A compositionally biased stretch (pro residues) spans 11–25; it reads QPPPKCPPKCPPKCP.

The protein belongs to the LCE family. Interacts with CYSRT1. As to expression, skin-specific. Expression was readily detected in adult trunk skin, adult arm skin, fetal skin, penal skin, vulva, esophagus and tongue. Not expressed in the cervix, rectum, lung, colon, or placenta.

Precursors of the cornified envelope of the stratum corneum. The protein is Late cornified envelope protein 2A (LCE2A) of Homo sapiens (Human).